Here is a 192-residue protein sequence, read N- to C-terminus: Ion-translocating oxidoreductase complex subunit B (192 aa).

The hydrophobic stretch occupies residues 1–26 (MNTIWIAVGALTLLGLVFGAILGYAS). A 4Fe-4S domain is found at 32–91 (EDDPVVEKIDAILPQSQCGQCGYPGCRPYAEAVGLQGEKINRCAPGGEAVMLKIAELLNV). [4Fe-4S] cluster contacts are provided by cysteine 49, cysteine 52, cysteine 57, cysteine 74, cysteine 117, cysteine 120, cysteine 123, cysteine 127, cysteine 147, cysteine 150, cysteine 153, and cysteine 157. 4Fe-4S ferredoxin-type domains follow at residues 108-137 (MLAV…GATR) and 138-167 (AMHT…LRPV).

It belongs to the 4Fe4S bacterial-type ferredoxin family. RnfB subfamily. As to quaternary structure, the complex is composed of six subunits: RsxA, RsxB, RsxC, RsxD, RsxE and RsxG. [4Fe-4S] cluster is required as a cofactor.

It localises to the cell inner membrane. In terms of biological role, part of a membrane-bound complex that couples electron transfer with translocation of ions across the membrane. Required to maintain the reduced state of SoxR. This is Ion-translocating oxidoreductase complex subunit B from Salmonella dublin (strain CT_02021853).